A 248-amino-acid chain; its full sequence is Positive alginate biosynthesis regulatory protein (248 aa).

The Response regulatory domain maps to 2–117 (NVLIVDDEPL…DLAEALKKAS (116 aa)). Position 54 is a 4-aspartylphosphate (Asp54). In terms of domain architecture, HTH LytTR-type spans 142 to 247 (ISARTRKGIE…VAGVRRLMHQ (106 aa)).

Its pathway is glycan biosynthesis; alginate biosynthesis [regulation]. Functionally, positive regulator of the algD gene, which codes for a GDP-mannose dehydrogenase, a key step enzyme in the alginate biosynthesis pathway. The chain is Positive alginate biosynthesis regulatory protein (algR) from Pseudomonas aeruginosa (strain ATCC 15692 / DSM 22644 / CIP 104116 / JCM 14847 / LMG 12228 / 1C / PRS 101 / PAO1).